We begin with the raw amino-acid sequence, 85 residues long: Small ribosomal subunit protein bS20 (85 aa).

It belongs to the bacterial ribosomal protein bS20 family.

Functionally, binds directly to 16S ribosomal RNA. This is Small ribosomal subunit protein bS20 from Borrelia garinii subsp. bavariensis (strain ATCC BAA-2496 / DSM 23469 / PBi) (Borreliella bavariensis).